A 407-amino-acid polypeptide reads, in one-letter code: E3 ubiquitin-protein ligase TRIM13 (407 aa).

The RING-type zinc finger occupies 10-58 (CPICCSLFDDPRVLPCSHNFCKKCLEGLLEGNVRNSLWRPSPFKCPTCR). The segment at 89-131 (PKMPVCKEHLGQPLNIFCVTDMQLICGVCATRGSHTKHVFSSI) adopts a B box-type zinc-finger fold. Positions 94, 97, 117, and 123 each coordinate Zn(2+). Residues 172–200 (LQLLTKDSDKVKEFFEKLQHTLDQKKNEI) adopt a coiled-coil conformation. Residues 316–336 (LLLMAVVLLGLLVFFGPTVFL) traverse the membrane as a helical segment.

Interacts (via C-terminal domain) with VCP. Interacts with AKT1; the interaction ubiquitinates AKT1 and leads to its proteasomal degradation. Interacts with MDM2; the interaction ubiquitinates AKT1 and leads to its proteasomal degradation. Interacts with p62/SQSTM1. Interacts with TRAF6. Interacts with IKBKG/NEMO. Auto-ubiquitinated; requires the RING-type zinc finger. Auto-polyubiquitination leads to proteasomal degradation.

It localises to the endoplasmic reticulum membrane. It carries out the reaction S-ubiquitinyl-[E2 ubiquitin-conjugating enzyme]-L-cysteine + [acceptor protein]-L-lysine = [E2 ubiquitin-conjugating enzyme]-L-cysteine + N(6)-ubiquitinyl-[acceptor protein]-L-lysine.. It participates in protein modification; protein ubiquitination. Functionally, endoplasmic reticulum (ER) membrane anchored E3 ligase involved in the retrotranslocation and turnover of membrane and secretory proteins from the ER through a set of processes named ER-associated degradation (ERAD). This process acts on misfolded proteins as well as in the regulated degradation of correctly folded proteins. Enhances ionizing radiation-induced p53/TP53 stability and apoptosis via ubiquitinating MDM2 and AKT1 and decreasing AKT1 kinase activity through MDM2 and AKT1 proteasomal degradation. Regulates ER stress-induced autophagy, and may act as a tumor suppressor. Also plays a role in innate immune response by stimulating NF-kappa-B activity in the TLR2 signaling pathway. Ubiquitinates TRAF6 via the 'Lys-29'-linked polyubiquitination chain resulting in NF-kappa-B activation. Participates as well in T-cell receptor-mediated NF-kappa-B activation. In the presence of TNF, modulates the IKK complex by regulating IKBKG/NEMO ubiquitination leading to the repression of NF-kappa-B. The chain is E3 ubiquitin-protein ligase TRIM13 (Trim13) from Rattus norvegicus (Rat).